The following is a 412-amino-acid chain: Serine--tRNA ligase (412 aa).

Residue 228–230 (TAE) coordinates L-serine. 259–261 (RKE) contacts ATP. Position 282 (glutamate 282) interacts with L-serine. An ATP-binding site is contributed by 346–349 (EISS). Serine 380 provides a ligand contact to L-serine.

It belongs to the class-II aminoacyl-tRNA synthetase family. Type-1 seryl-tRNA synthetase subfamily. Homodimer. The tRNA molecule binds across the dimer.

It is found in the cytoplasm. It carries out the reaction tRNA(Ser) + L-serine + ATP = L-seryl-tRNA(Ser) + AMP + diphosphate + H(+). The catalysed reaction is tRNA(Sec) + L-serine + ATP = L-seryl-tRNA(Sec) + AMP + diphosphate + H(+). The protein operates within aminoacyl-tRNA biosynthesis; selenocysteinyl-tRNA(Sec) biosynthesis; L-seryl-tRNA(Sec) from L-serine and tRNA(Sec): step 1/1. Its function is as follows. Catalyzes the attachment of serine to tRNA(Ser). Is also able to aminoacylate tRNA(Sec) with serine, to form the misacylated tRNA L-seryl-tRNA(Sec), which will be further converted into selenocysteinyl-tRNA(Sec). This chain is Serine--tRNA ligase, found in Aliarcobacter butzleri (strain RM4018) (Arcobacter butzleri).